A 308-amino-acid chain; its full sequence is Protoheme IX farnesyltransferase (308 aa).

The next 9 membrane-spanning stretches (helical) occupy residues 31–51 (VGIVYSNLITTFTGMWLAFYF), 60–80 (LDIVLFTLAGSSLIIAGSCVI), 110–130 (ALWFGILLTALGFIMLLMTNL), 131–151 (TAAGVGFVGVFTYVFLYTMWS), 157–177 (VNTIIGSVSGAVPPLIGWTAV), 185–205 (AWVLFLIMFIWQIPHFLALAI), 232–252 (IIIWIACLMPLPFFLGGLGLP), 253–273 (IVILGTVLNIGWLVCGLVGYR), and 285–305 (FVYSLNYLTIFFVAMVVFTLF).

The protein belongs to the UbiA prenyltransferase family. Protoheme IX farnesyltransferase subfamily. In terms of assembly, interacts with CtaA.

It localises to the cell membrane. It carries out the reaction heme b + (2E,6E)-farnesyl diphosphate + H2O = Fe(II)-heme o + diphosphate. It participates in porphyrin-containing compound metabolism; heme O biosynthesis; heme O from protoheme: step 1/1. Converts heme B (protoheme IX) to heme O by substitution of the vinyl group on carbon 2 of heme B porphyrin ring with a hydroxyethyl farnesyl side group. The sequence is that of Protoheme IX farnesyltransferase from Bacillus licheniformis (strain ATCC 14580 / DSM 13 / JCM 2505 / CCUG 7422 / NBRC 12200 / NCIMB 9375 / NCTC 10341 / NRRL NRS-1264 / Gibson 46).